The following is a 444-amino-acid chain: Putative methylesterase 13, chloroplastic (444 aa).

3 disordered regions span residues 1–32 (MGNS…KYKY), 49–90 (PSLS…KDSH), and 124–176 (SVVY…QLVD). Residues 1 to 60 (MGNSFTCISHEQEQRPKKSSGGGGNNSGKYKYVRRLSLMPSFRRRTLLPSLSCSGSSSTS) constitute a chloroplast transit peptide. Residues 49-64 (PSLSCSGSSSTSSSKK) show a composition bias toward low complexity. Over residues 65–82 (GGIKAKTKKIRERHHHHH) the composition is skewed to basic residues. Residues 124-148 (SVVYPSAQPSGTSSGPVSAVQTPKK) are compositionally biased toward polar residues. Residues 149 to 164 (SSAGFVRSSSSRQRSS) show a composition bias toward low complexity. Residues 190–310 (FVLVHGGGFG…LFNQQLGSND (121 aa)) enclose the AB hydrolase-1 domain. The active-site Acyl-ester intermediate is Asp-264. Residues Asp-390 and His-418 each act as charge relay system in the active site.

The protein belongs to the AB hydrolase superfamily. Methylesterase family.

It is found in the plastid. It localises to the chloroplast. Functionally, putative methylesterase. This is Putative methylesterase 13, chloroplastic from Arabidopsis thaliana (Mouse-ear cress).